A 233-amino-acid chain; its full sequence is Ribosome-recycling factor, mitochondrial (233 aa).

The protein belongs to the RRF family.

It is found in the mitochondrion. Necessary for protein synthesis in mitochondria. Functions as a ribosome recycling factor in mitochondria. This chain is Ribosome-recycling factor, mitochondrial (RRF1), found in Candida glabrata (strain ATCC 2001 / BCRC 20586 / JCM 3761 / NBRC 0622 / NRRL Y-65 / CBS 138) (Yeast).